The primary structure comprises 226 residues: 7-cyano-7-deazaguanine synthase (226 aa).

An ATP-binding site is contributed by 12-22; the sequence is LSGGLDSATVV. 4 residues coordinate Zn(2+): Cys-191, Cys-201, Cys-204, and Cys-207.

Belongs to the QueC family. Zn(2+) is required as a cofactor.

The enzyme catalyses 7-carboxy-7-deazaguanine + NH4(+) + ATP = 7-cyano-7-deazaguanine + ADP + phosphate + H2O + H(+). The protein operates within purine metabolism; 7-cyano-7-deazaguanine biosynthesis. Catalyzes the ATP-dependent conversion of 7-carboxy-7-deazaguanine (CDG) to 7-cyano-7-deazaguanine (preQ(0)). This Pseudomonas syringae pv. tomato (strain ATCC BAA-871 / DC3000) protein is 7-cyano-7-deazaguanine synthase.